A 60-amino-acid chain; its full sequence is Large ribosomal subunit protein bL32 (60 aa).

Positions 1 to 20 are enriched in basic residues; the sequence is MAVQKSRKSRSRRDMRRSHH. Residues 1 to 22 form a disordered region; that stretch reads MAVQKSRKSRSRRDMRRSHHRM.

This sequence belongs to the bacterial ribosomal protein bL32 family.

This chain is Large ribosomal subunit protein bL32, found in Psychrobacter arcticus (strain DSM 17307 / VKM B-2377 / 273-4).